The sequence spans 336 residues: uncharacterized protein (336 aa).

Disordered regions lie at residues 29 to 93 (GGVS…HSGA) and 116 to 147 (LQER…GVTG). 2 stretches are compositionally biased toward polar residues: residues 70 to 82 (SGGS…TSTA) and 125 to 141 (PWRT…SQPH).

This is an uncharacterized protein from Bos taurus (Bovine).